The chain runs to 241 residues: ATP synthase subunit a (241 aa).

Helical transmembrane passes span 21-41, 84-104, 116-136, 183-203, and 207-227; these read LASILMVIITSLIVLVIAIAC, VTLILFIFVGNMLGLPFAIVI, DATVTLTLATMVILLTHYYGI, ILIGLLSSLIIGHAAWGWIIG, and LIAWQAFSIFIGTIQAYIFIM.

It belongs to the ATPase A chain family. In terms of assembly, F-type ATPases have 2 components, CF(1) - the catalytic core - and CF(0) - the membrane proton channel. CF(1) has five subunits: alpha(3), beta(3), gamma(1), delta(1), epsilon(1). CF(0) has three main subunits: a(1), b(2) and c(9-12). The alpha and beta chains form an alternating ring which encloses part of the gamma chain. CF(1) is attached to CF(0) by a central stalk formed by the gamma and epsilon chains, while a peripheral stalk is formed by the delta and b chains.

Its subcellular location is the cell membrane. Key component of the proton channel; it plays a direct role in the translocation of protons across the membrane. In Staphylococcus carnosus (strain TM300), this protein is ATP synthase subunit a.